Consider the following 115-residue polypeptide: Small ribosomal subunit protein bS6 (115 aa).

This sequence belongs to the bacterial ribosomal protein bS6 family.

Functionally, binds together with bS18 to 16S ribosomal RNA. The protein is Small ribosomal subunit protein bS6 of Syntrophotalea carbinolica (strain DSM 2380 / NBRC 103641 / GraBd1) (Pelobacter carbinolicus).